We begin with the raw amino-acid sequence, 400 residues long: Deoxyguanosinetriphosphate triphosphohydrolase-like protein (400 aa).

The HD domain maps to 73-215; that stretch reads RLTHSIEVSQ…AAIADDIAYN (143 aa).

The protein belongs to the dGTPase family. Type 2 subfamily.

The sequence is that of Deoxyguanosinetriphosphate triphosphohydrolase-like protein from Bartonella quintana (strain Toulouse) (Rochalimaea quintana).